We begin with the raw amino-acid sequence, 327 residues long: Interleukin-12 subunit beta (327 aa).

The N-terminal stretch at 1 to 22 is a signal peptide; that stretch reads MCHQKLTISWFAMVLLVSPLMA. The Ig-like C2-type domain maps to 23-106; sequence IWELEKDVYV…LSHSRLLLHK (84 aa). Cys50 and Cys90 are disulfide-bonded. Residues Asn125, Asn135, Asn223, and Asn315 are each glycosylated (N-linked (GlcNAc...) asparagine). Positions 238-327 constitute a Fibronectin type-III domain; sequence PPKNLQLKPL…WSEWASVSCN (90 aa).

This sequence belongs to the IL-12B family. Heterodimer with IL12A; disulfide-linked. The heterodimer is known as interleukin IL-12. Heterodimer with IL23A; disulfide-linked. The heterodimer is known as interleukin IL-23. Also secreted as a monomer. Interacts with NBR1; this interaction promotes IL-12 secretion.

Its subcellular location is the secreted. Cytokine that can act as a growth factor for activated T and NK cells, enhance the lytic activity of NK/lymphokine-activated killer cells, and stimulate the production of IFN-gamma by resting PBMC. In terms of biological role, associates with IL23A to form the IL-23 interleukin, a heterodimeric cytokine which functions in innate and adaptive immunity. IL-23 may constitute with IL-17 an acute response to infection in peripheral tissues. IL-23 binds to a heterodimeric receptor complex composed of IL12RB1 and IL23R, activates the Jak-Stat signaling cascade, stimulates memory rather than naive T-cells and promotes production of pro-inflammatory cytokines. IL-23 induces autoimmune inflammation and thus may be responsible for autoimmune inflammatory diseases and may be important for tumorigenesis. This Sigmodon hispidus (Hispid cotton rat) protein is Interleukin-12 subunit beta (IL12B).